The chain runs to 206 residues: Probable N-acetyltransferase 14 (206 aa).

Positions 9-206 (LSVREMREEE…TIVQEFRKDI (198 aa)) constitute an N-acetyltransferase domain. Transmembrane regions (helical) follow at residues 37 to 57 (LILY…ASSG) and 60 to 80 (FILN…IVGL).

It belongs to the camello family.

Its subcellular location is the membrane. Its function is as follows. Probable acetyltransferase. The chain is Probable N-acetyltransferase 14 (nat14) from Xenopus tropicalis (Western clawed frog).